Here is a 660-residue protein sequence, read N- to C-terminus: MKAVIFAYHDMGCQGVQAVLDAGYEIAAIFTHADNPAENTFFGSVSRQAAELGIPVYAPDNVNHPIWVDRIAELAPDIIFSFYYRNLLSEEILHLAPAGAFNLHGSLLPAYRGRAPLNWVLVNGESETGVTLHRMVKRADAGEIVASQRVAIAQDDVALTLHHKLCQAARQLLNSILPTMKCGDIPSVPQRESDSTYYGRRRPEDGLIDWHKPVSTVHNLVRAVAAPWPGAFSYNGSQKFTIWSSRMCPDAQGALPGSVISVSPLRVACADGALEIITGQAGDDITVQGSQLAQTLGLVAGARLNRPPATSGKRRIRVLILGVNGFIGNHLTERLLNEENYEVYGMDIGSNAISRFLLHPRFHFVEGDISIHSEWIEYHVKKCDVVLPLVAIATPIEYTRNPLRVFELDFEENLRIIRYCVKYRKRVVFPSTSEVYGMCTDASFDEDKSNLIVGPVNKPRWIYSVSKQLLDRVIWAYGEKEGLRFTLFRPFNWMGPRLDSLNAARIGSSRAITQLILNLVEGTPIKLIDGGQQKRCFTDIRDGIEALFRIIVNDGDRCDGKIINIGNPDNEASIQELATLLLDSFDKHPLRCHFPPFAGFQVVESRSYYGKGYQDVAHRKPSIDNARRCLGWEPSIAMRDTVEETLDFFLRSVDIAERAS.

The tract at residues 1–304 (MKAVIFAYHD…TLGLVAGARL (304 aa)) is formyltransferase ArnAFT. Histidine 104 serves as the catalytic Proton donor; for formyltransferase activity. (6R)-10-formyltetrahydrofolate-binding positions include arginine 114 and 136 to 140 (VKRAD). A dehydrogenase ArnADH region spans residues 314–660 (RRIRVLILGV…RSVDIAERAS (347 aa)). NAD(+) is bound by residues aspartate 347 and 368-369 (DI). Residues alanine 393, tyrosine 398, and 432–433 (TS) each bind UDP-alpha-D-glucuronate. Glutamate 434 functions as the Proton acceptor; for decarboxylase activity in the catalytic mechanism. UDP-alpha-D-glucuronate contacts are provided by residues arginine 460, asparagine 492, 526–535 (KLIDGGQQKR), and tyrosine 613. Arginine 619 acts as the Proton donor; for decarboxylase activity in catalysis.

The protein in the N-terminal section; belongs to the Fmt family. UDP-L-Ara4N formyltransferase subfamily. This sequence in the C-terminal section; belongs to the NAD(P)-dependent epimerase/dehydratase family. UDP-glucuronic acid decarboxylase subfamily. As to quaternary structure, homohexamer, formed by a dimer of trimers.

It catalyses the reaction UDP-alpha-D-glucuronate + NAD(+) = UDP-beta-L-threo-pentopyranos-4-ulose + CO2 + NADH. The catalysed reaction is UDP-4-amino-4-deoxy-beta-L-arabinose + (6R)-10-formyltetrahydrofolate = UDP-4-deoxy-4-formamido-beta-L-arabinose + (6S)-5,6,7,8-tetrahydrofolate + H(+). It functions in the pathway nucleotide-sugar biosynthesis; UDP-4-deoxy-4-formamido-beta-L-arabinose biosynthesis; UDP-4-deoxy-4-formamido-beta-L-arabinose from UDP-alpha-D-glucuronate: step 1/3. The protein operates within nucleotide-sugar biosynthesis; UDP-4-deoxy-4-formamido-beta-L-arabinose biosynthesis; UDP-4-deoxy-4-formamido-beta-L-arabinose from UDP-alpha-D-glucuronate: step 3/3. Its pathway is bacterial outer membrane biogenesis; lipopolysaccharide biosynthesis. In terms of biological role, bifunctional enzyme that catalyzes the oxidative decarboxylation of UDP-glucuronic acid (UDP-GlcUA) to UDP-4-keto-arabinose (UDP-Ara4O) and the addition of a formyl group to UDP-4-amino-4-deoxy-L-arabinose (UDP-L-Ara4N) to form UDP-L-4-formamido-arabinose (UDP-L-Ara4FN). The modified arabinose is attached to lipid A and is required for resistance to polymyxin and cationic antimicrobial peptides. The chain is Bifunctional polymyxin resistance protein ArnA (arnA) from Salmonella typhimurium (strain LT2 / SGSC1412 / ATCC 700720).